The primary structure comprises 366 residues: Chorismate synthase (366 aa).

Positions 48 and 54 each coordinate NADP(+). FMN is bound by residues Arg-132–Ser-134, Asn-244–Ala-245, Gly-289, Lys-304–Ser-308, and Arg-330.

Belongs to the chorismate synthase family. Homotetramer. FMNH2 is required as a cofactor.

It catalyses the reaction 5-O-(1-carboxyvinyl)-3-phosphoshikimate = chorismate + phosphate. The protein operates within metabolic intermediate biosynthesis; chorismate biosynthesis; chorismate from D-erythrose 4-phosphate and phosphoenolpyruvate: step 7/7. In terms of biological role, catalyzes the anti-1,4-elimination of the C-3 phosphate and the C-6 proR hydrogen from 5-enolpyruvylshikimate-3-phosphate (EPSP) to yield chorismate, which is the branch point compound that serves as the starting substrate for the three terminal pathways of aromatic amino acid biosynthesis. This reaction introduces a second double bond into the aromatic ring system. The chain is Chorismate synthase from Methylorubrum populi (strain ATCC BAA-705 / NCIMB 13946 / BJ001) (Methylobacterium populi).